The following is a 205-amino-acid chain: Glycerol-3-phosphate acyltransferase (205 aa).

Topologically, residues 1 to 3 (MSA) are periplasmic. A helical membrane pass occupies residues 4–24 (IAPGMILFAYLCGSISSAILV). The Cytoplasmic portion of the chain corresponds to 25–52 (CRIAGLPDPRESGSGNPGATNVLRIGGK). Residues 53-73 (GAAVAVLIFDILKGMLPVWGA) traverse the membrane as a helical segment. Over 74-80 (YALGVTP) the chain is Periplasmic. The chain crosses the membrane as a helical span at residues 81–101 (FWLGLIAIAACLGHIWPVFFG). Residues 102 to 111 (FKGGKGVATA) lie on the Cytoplasmic side of the membrane. Residues 112-132 (FGAIAPIGWDLTGVMAGTWLL) traverse the membrane as a helical segment. Over 133–137 (TVLLS) the chain is Periplasmic. The helical transmembrane segment at 138–158 (GYSSLGAIVSALIAPFYVWWF) threads the bilayer. The Cytoplasmic portion of the chain corresponds to 159–205 (KPQFTFPVSMLSCLILLRHHDNIQRLWRRQETKIWTKLKKKRQKDSE).

This sequence belongs to the PlsY family. In terms of assembly, probably interacts with PlsX.

Its subcellular location is the cell inner membrane. It catalyses the reaction sn-glycerol 3-phosphate + an acyl-CoA = a 1-acyl-sn-glycero-3-phosphate + CoA. It carries out the reaction a fatty acyl-[ACP] + sn-glycerol 3-phosphate = a 1-acyl-sn-glycero-3-phosphate + holo-[ACP]. It participates in lipid metabolism; phospholipid metabolism. Functionally, catalyzes the transfer of an acyl group from acyl-ACP to glycerol-3-phosphate (G3P) to form lysophosphatidic acid (LPA). This enzyme can also utilize acyl-CoA as fatty acyl donor, but not acyl-PO(4). This Salmonella schwarzengrund (strain CVM19633) protein is Glycerol-3-phosphate acyltransferase.